The following is a 356-amino-acid chain: MRVTDFFFELPESLIAHYPMPERSSCRLLSLDGPTGALTHGTFTDLLDKLNPGDLLVFNNTRVIPARLFGRKASGGKIEVLVERMLDDKRILAHIRASKAPKPGAELLLGDDESINATMTARHGALFEVEFNDDRSVLDILNSIGHMPLPPYIDRPDEDADRELYQTVYSEKPGAVAAPTAGLHFDEPLLEKLRAKGVEMAFVTLHVGAGTFQPVRVDTIEDHIMHSEYAEVPQDVVDAVLAAKARGNRVIAVGTTSVRSLESAAQAAKNDLIEPFFDDTQIFIYPGFQYKVVDALVTNFHLPESTLIMLVSAFAGYQHTMNAYKAAVEEKYRFFSYGDAMFITYNPQAINERVGE.

The protein belongs to the QueA family. As to quaternary structure, monomer.

Its subcellular location is the cytoplasm. It carries out the reaction 7-aminomethyl-7-carbaguanosine(34) in tRNA + S-adenosyl-L-methionine = epoxyqueuosine(34) in tRNA + adenine + L-methionine + 2 H(+). It participates in tRNA modification; tRNA-queuosine biosynthesis. Its function is as follows. Transfers and isomerizes the ribose moiety from AdoMet to the 7-aminomethyl group of 7-deazaguanine (preQ1-tRNA) to give epoxyqueuosine (oQ-tRNA). In Shigella boydii serotype 4 (strain Sb227), this protein is S-adenosylmethionine:tRNA ribosyltransferase-isomerase.